We begin with the raw amino-acid sequence, 215 residues long: uncharacterized protein (215 aa).

A disordered region spans residues 25-48 (LKSASPGPAPASQQASSFGSAPAQ). Positions 27–47 (SASPGPAPASQQASSFGSAPA) are enriched in low complexity.

This is an uncharacterized protein from Homo sapiens (Human).